A 170-amino-acid polypeptide reads, in one-letter code: Tubulin polymerization-promoting protein family member 2 (170 aa).

Over residues 105 to 117 the composition is skewed to low complexity; it reads TTGVTKSTTVGGV. A disordered region spans residues 105–170; the sequence is TTGVTKSTTV…GAGTYDKKNQ (66 aa). Positions 129-149 are enriched in basic and acidic residues; it reads THKERFDESGKGKGIEGREET.

The protein belongs to the TPPP family. Only expressed in male reproductive organs, including testis. Expressed in elongating spermatids at stages IV-VIII of the seminiferous epithelial cycle in testis and in mature sperm in the epididymis.

The protein resides in the cytoplasm. The protein localises to the cytosol. It is found in the cell projection. Its subcellular location is the cilium. It localises to the flagellum. Functionally, probable regulator of microtubule dynamics required for sperm motility. In contrast to other members of the family, has no microtubule bundling activity. The polypeptide is Tubulin polymerization-promoting protein family member 2 (Mus musculus (Mouse)).